The sequence spans 90 residues: Cell division topological specificity factor (90 aa).

Belongs to the MinE family.

Functionally, prevents the cell division inhibition by proteins MinC and MinD at internal division sites while permitting inhibition at polar sites. This ensures cell division at the proper site by restricting the formation of a division septum at the midpoint of the long axis of the cell. This is Cell division topological specificity factor from Francisella philomiragia subsp. philomiragia (strain ATCC 25017 / CCUG 19701 / FSC 153 / O#319-036).